The chain runs to 176 residues: dCTP deaminase (176 aa).

DCTP-binding positions include 102-107 (RSTFAR) and Asp118. Residue Glu128 is the Proton donor/acceptor of the active site. Positions 160, 166, and 167 each coordinate dCTP.

It belongs to the dCTP deaminase family. In terms of assembly, homotrimer.

The catalysed reaction is dCTP + H2O + H(+) = dUTP + NH4(+). It functions in the pathway pyrimidine metabolism; dUMP biosynthesis; dUMP from dCTP (dUTP route): step 1/2. Its function is as follows. Catalyzes the deamination of dCTP to dUTP. The protein is dCTP deaminase of Staphylothermus marinus (strain ATCC 43588 / DSM 3639 / JCM 9404 / F1).